The following is a 637-amino-acid chain: Neuroendocrine convertase 2 (637 aa).

Residues 1-24 (MEGGCGSQWKAAGLLFCVMVFASA) form the signal peptide. A propeptide spanning residues 25–108 (ERPVFTNHFL…QQEGFDRKKR (84 aa)) is cleaved from the precursor. The Peptidase S8 domain occupies 128 to 452 (QWYLFNTGQA…YGVLDAGAMV (325 aa)). Residues D166 and H207 each act as charge relay system in the active site. 2 disulfide bridges follow: C224/C375 and C316/C346. Residue N374 is glycosylated (N-linked (GlcNAc...) asparagine). The active-site Charge relay system is the S383. One can recognise a P/Homo B domain in the interval 460–596 (TVPERFHCVG…TLMLHGTQSA (137 aa)). A disulfide bridge links C467 with C493. N513 and N523 each carry an N-linked (GlcNAc...) asparagine glycan.

The protein belongs to the peptidase S8 family. Furin subfamily.

It localises to the cytoplasmic vesicle. Its subcellular location is the secretory vesicle. The protein resides in the secreted. The catalysed reaction is Release of protein hormones and neuropeptides from their precursors, generally by hydrolysis of -Lys-Arg-|- bonds.. Functionally, serine endopeptidase which is involved in the processing of hormone and other protein precursors at sites comprised of pairs of basic amino acid residues. Responsible for the release of glucagon from proglucagon in pancreatic A cells. The protein is Neuroendocrine convertase 2 (Pcsk2) of Rattus norvegicus (Rat).